The following is a 353-amino-acid chain: Histidine biosynthesis bifunctional protein HisB (353 aa).

The segment at 1–164 (MKNKILFIDR…HITKYIIKHN (164 aa)) is histidinol-phosphatase. The active-site Nucleophile is the aspartate 9. The Mg(2+) site is built by aspartate 9 and aspartate 11. Residue aspartate 11 is the Proton donor of the active site. Cysteine 93, histidine 95, cysteine 101, and cysteine 103 together coordinate Zn(2+). Residue aspartate 128 coordinates Mg(2+). Residues 165 to 353 (RYAEIIRRTK…NMLPTSKGIL (189 aa)) are imidazoleglycerol-phosphate dehydratase.

This sequence in the N-terminal section; belongs to the histidinol-phosphatase family. It in the C-terminal section; belongs to the imidazoleglycerol-phosphate dehydratase family. The cofactor is Mg(2+). Requires Zn(2+) as cofactor.

The protein resides in the cytoplasm. The enzyme catalyses D-erythro-1-(imidazol-4-yl)glycerol 3-phosphate = 3-(imidazol-4-yl)-2-oxopropyl phosphate + H2O. The catalysed reaction is L-histidinol phosphate + H2O = L-histidinol + phosphate. It functions in the pathway amino-acid biosynthesis; L-histidine biosynthesis; L-histidine from 5-phospho-alpha-D-ribose 1-diphosphate: step 6/9. The protein operates within amino-acid biosynthesis; L-histidine biosynthesis; L-histidine from 5-phospho-alpha-D-ribose 1-diphosphate: step 8/9. In Buchnera aphidicola subsp. Acyrthosiphon pisum (strain Tuc7), this protein is Histidine biosynthesis bifunctional protein HisB.